Reading from the N-terminus, the 242-residue chain is Ribonuclease PH (242 aa).

Residues Arg90 and 128–130 (GTR) each bind phosphate.

The protein belongs to the RNase PH family. Homohexameric ring arranged as a trimer of dimers.

It catalyses the reaction tRNA(n+1) + phosphate = tRNA(n) + a ribonucleoside 5'-diphosphate. Functionally, phosphorolytic 3'-5' exoribonuclease that plays an important role in tRNA 3'-end maturation. Removes nucleotide residues following the 3'-CCA terminus of tRNAs; can also add nucleotides to the ends of RNA molecules by using nucleoside diphosphates as substrates, but this may not be physiologically important. Probably plays a role in initiation of 16S rRNA degradation (leading to ribosome degradation) during starvation. In Nocardioides sp. (strain ATCC BAA-499 / JS614), this protein is Ribonuclease PH.